We begin with the raw amino-acid sequence, 88 residues long: LYR motif-containing protein 2 (88 aa).

The N-terminal 19 residues, 1–19, are a transit peptide targeting the mitochondrion; it reads MAVSRLPPAALSLKQFLQR.

The protein belongs to the complex I LYR family.

Its subcellular location is the mitochondrion. In terms of biological role, involved in efficient integration of the N-module into mitochondrial respiratory chain complex I. The protein is LYR motif-containing protein 2 (lyrm2) of Danio rerio (Zebrafish).